A 1386-amino-acid polypeptide reads, in one-letter code: Rab3 GTPase-activating protein non-catalytic subunit (1386 aa).

The segment at 31 to 69 is disordered; sequence GALRRDPSKTSNWEDDSWGAWEETEPQEPEEEGNTSKTQ. Phosphoserine is present on S38. Over residues 43–63 the composition is skewed to acidic residues; sequence WEDDSWGAWEETEPQEPEEEG. The residue at position 448 (S448) is a Phosphoserine. T899 carries the phosphothreonine modification. S914 is modified (phosphoserine). Positions 959–973 are enriched in basic and acidic residues; sequence REKDVENPDEPREGI. The disordered stretch occupies residues 959 to 982; that stretch reads REKDVENPDEPREGIARSPPEVSE. Residue S976 is modified to Phosphoserine.

This sequence belongs to the Rab3-GAP regulatory subunit family. As to quaternary structure, the Rab3 GTPase-activating complex is a heterodimer composed of Rab3gap1 and Rab3gap2. The Rab3 GTPase-activating complex interacts with DMXL2. Interacts with LMAN1.

It is found in the cytoplasm. It localises to the endoplasmic reticulum. Its function is as follows. Regulatory subunit of the Rab3 GTPase-activating (Rab3GAP) complex composed of RAB3GAP1 and RAB3GAP2, which has GTPase-activating protein (GAP) activity towards various Rab3 subfamily members (RAB3A, RAB3B, RAB3C and RAB3D), RAB5A and RAB43, and guanine nucleotide exchange factor (GEF) activity towards RAB18. As part of the Rab3GAP complex, acts as a GAP for Rab3 proteins by converting active RAB3-GTP to the inactive form RAB3-GDP. Rab3 proteins are involved in regulated exocytosis of neurotransmitters and hormones. The Rab3GAP complex acts as a GEF for RAB18 by promoting the conversion of inactive RAB18-GDP to the active form RAB18-GTP. Recruits and stabilizes RAB18 at the cis-Golgi membrane in fibroblasts where RAB18 is most likely activated. Also involved in RAB18 recruitment at the endoplasmic reticulum (ER) membrane where it maintains proper ER structure. Required for normal eye and brain development. May participate in neurodevelopmental processes such as proliferation, migration and differentiation before synapse formation, and non-synaptic vesicular release of neurotransmitters. The protein is Rab3 GTPase-activating protein non-catalytic subunit of Rattus norvegicus (Rat).